The chain runs to 872 residues: MSTLGKRAGVRRRVRAVATAATATALVAVPLTTLATSASAAPVHVDNPYAGAVQYVNPTWAASVNAAAGRQSADPALAAKMRTVAGQPTAVWMDRISAITGNADGNGLKFHLDNAVAQQKAAGVPLVFNLVIYDLPGRDCFALASNGELPATDAGLARYKSEYIDPIADLLDNPEYESIRIAATIEPDSLPNLTTNISEPACQQAAPYYRQGVKYALDKLHAIPNVYNYIDIGHSGWLGWDSNAGPSATLFAEVAKSTTAGFASIDGFVSDVANTTPLEEPLLSDSSLTINNTPIRSSKFYEWNFDFDEIDYTAHMHRLLVAAGFPSSIGMLVDTSRNGWGGPNRPTSITASTDVNAYVDANRVDRRVHRGAWCNPLGAGIGRFPEATPSGYAASHLDAFVWIKPPGESDGASTDIPNDQGKRFDRMCDPTFVSPKLNNQLTGATPNAPLAGQWFEEQFVTLVKNAYPVIGGTTPVEDLVAPTVPTGLTAGTTTATSVPLSWTASTDNVAVTGYDVYRGTTLVGTTAATSYTVTGLTPATAYSFTVRAKDAAGNVSAASAAAAATTQSGTVTDTTAPSVPAGLTAGTTTTTTVPLSWTASTDNAGGSGVAGYEVLRGTTVVGTTTATSYTVTGLTAGTTYSFSVRAKDVAGNTSAASAAVSATTQTGTVVDTTAPSVPTGLTAGTTTTSSVPLTWTASTDNAGGSGVAGYEVFNGTTRVATVTSTSYTVTGLAADTAYSFTVKAKDVAGNVSAASAAVSARTQAATSGGCTVKYSASSWNTGFTGTVEVKNNGTAALNGWTLGFSFADGQKVSQGWSAEWSQSGTAVTAKNAPWNGTLAAGSSVSIGFNGTHNGTNTAPTAFTLNGVACTLG.

A signal peptide spans 1 to 40; it reads MSTLGKRAGVRRRVRAVATAATATALVAVPLTTLATSASA. The interval 41 to 477 is catalytic; the sequence is APVHVDNPYA…PVIGGTTPVE (437 aa). Intrachain disulfides connect Cys-140/Cys-202 and Cys-374/Cys-428. The active-site Proton donor is the Asp-188. Asp-410 (nucleophile) is an active-site residue. Fibronectin type-III domains follow at residues 484–569, 579–667, and 677–765; these read VPTG…TQSG, VPAG…TQTG, and VPTG…TQAA. The 110-residue stretch at 763–872 folds into the CBM2 domain; it reads QAATSGGCTV…TLNGVACTLG (110 aa). A disulfide bond links Cys-770 and Cys-869.

This sequence belongs to the glycosyl hydrolase 6 (cellulase B) family.

The enzyme catalyses Hydrolysis of (1-&gt;4)-beta-D-glucosidic linkages in cellulose and cellotetraose, releasing cellobiose from the non-reducing ends of the chains.. This enzyme hydrolyzes 1,4-beta-D-glucosidic linkages of cellulose. Weak activity against carboxymethylcellulose, bacterial microcrystalline cellulose and barley beta-glucan. Also has weak endoglucanase activity. Hydrolyzes glucosidic bonds with inversion of anomeric configuration. This is Exoglucanase A (cbhA) from Cellulomonas fimi (strain ATCC 484 / DSM 20113 / JCM 1341 / CCUG 24087 / LMG 16345 / NBRC 15513 / NCIMB 8980 / NCTC 7547 / NRS-133).